Consider the following 66-residue polypeptide: UPF0337 protein BA_0987/GBAA_0987/BAS0923 (66 aa).

Positions 1 to 22 are disordered; it reads MSESGLKEQITGKVEKTKGQVK. A compositionally biased stretch (basic and acidic residues) spans 13-22; that stretch reads KVEKTKGQVK.

Belongs to the UPF0337 (CsbD) family.

This Bacillus anthracis protein is UPF0337 protein BA_0987/GBAA_0987/BAS0923.